A 400-amino-acid polypeptide reads, in one-letter code: MSLYRTFTADDAVEYARQYGGVSQPQTLVTAEEIGDGNLNLVFKIKDEAGISRVIVKQALPYVRCVGESWPLTLDRARIEAETLLTHARFCPQHTVTVLYHDPELAVMVQEDLSDHRIWRSELVRGADYPQAAAQLGEYLAQTLFHTSDFYQHPHEKKAAVSQFTNPELCEITEDLFFTDPYIDHERNQFDAALTPDVQTLRDDRALKLAVAGLKHRFLSKAEALLHGDIHSGSIFVAEGRLKVIDAEFGFYGPMGFDIGTAIGNLLLNYCGLPGLLAPREAAAGRERRLEDIRTLWQTFSARFLALSESDCREPALAESGYAALFLQQVWLDAIGFCGTELIRRTIGLAHVVDLDSIQETDARLACQRHVLSLGRTLVLAAPHIADVDALLARVRQSGA.

Residues N40, K57, and 111-113 (EDL) each bind ATP. D229 is a substrate binding site. 246–248 (DAE) contacts ATP. R344 is a substrate binding site.

The protein belongs to the methylthioribose kinase family. In terms of assembly, homodimer.

The enzyme catalyses 5-(methylsulfanyl)-D-ribose + ATP = 5-(methylsulfanyl)-alpha-D-ribose 1-phosphate + ADP + H(+). The protein operates within amino-acid biosynthesis; L-methionine biosynthesis via salvage pathway; S-methyl-5-thio-alpha-D-ribose 1-phosphate from S-methyl-5'-thioadenosine (hydrolase route): step 2/2. In terms of biological role, catalyzes the phosphorylation of methylthioribose into methylthioribose-1-phosphate. This chain is Methylthioribose kinase, found in Pectobacterium atrosepticum (strain SCRI 1043 / ATCC BAA-672) (Erwinia carotovora subsp. atroseptica).